A 449-amino-acid polypeptide reads, in one-letter code: GTPase Der (449 aa).

2 consecutive EngA-type G domains span residues 4–169 (PIVA…PAGE) and 177–353 (IQVA…EQHR). Residues 10–17 (GRPNVGKS), 57–61 (DTGGL), 120–123 (NKCE), 183–190 (GRPNVGKS), 230–234 (DTAGI), and 295–298 (NKWD) contribute to the GTP site. Positions 354–439 (RRVTTAVVND…PIRLLWRSKK (86 aa)) constitute a KH-like domain.

It belongs to the TRAFAC class TrmE-Era-EngA-EngB-Septin-like GTPase superfamily. EngA (Der) GTPase family. As to quaternary structure, associates with the 50S ribosomal subunit.

GTPase that plays an essential role in the late steps of ribosome biogenesis. This chain is GTPase Der, found in Thermosynechococcus vestitus (strain NIES-2133 / IAM M-273 / BP-1).